Consider the following 363-residue polypeptide: Fructose-bisphosphate aldolase A (363 aa).

R43 provides a ligand contact to beta-D-fructose 1,6-bisphosphate. Residue E188 is the Proton acceptor of the active site. K230 (schiff-base intermediate with dihydroxyacetone-P) is an active-site residue. Beta-D-fructose 1,6-bisphosphate is bound by residues 272–274 (SGG), S301, and R304.

This sequence belongs to the class I fructose-bisphosphate aldolase family. In terms of assembly, tetramer.

The enzyme catalyses beta-D-fructose 1,6-bisphosphate = D-glyceraldehyde 3-phosphate + dihydroxyacetone phosphate. The protein operates within carbohydrate degradation; glycolysis; D-glyceraldehyde 3-phosphate and glycerone phosphate from D-glucose: step 4/4. In terms of biological role, plays a key role in glycolysis and gluconeogenesis. The protein is Fructose-bisphosphate aldolase A of Salmo salar (Atlantic salmon).